Consider the following 70-residue polypeptide: Conotoxin elongated-tx3a-a (70 aa).

Residues Met1 to Ala24 form the signal peptide. Positions Asp25 to Arg44 are excised as a propeptide. Disulfide bonds link Cys55–Cys68, Cys56–Cys66, and Cys61–Cys69. Trp58 bears the 6'-bromotryptophan; partial mark. Residue Cys69 is modified to Cysteine amide; partial.

This sequence belongs to the conotoxin M superfamily. In terms of processing, two short peptides are produced from this precursor; Conotoxin tx3a-b is amidated at Cys-69 (but has no bromotryptophan), whereas conotoxin tx3a-a has an unmodified Gly-70 and a bromotryptophan. Two elongated peptides are also produced; Conotoxin elongated-tx3a-b is amidated at Cys-69 (but has no bromotryptophan), whereas conotoxin elongated tx3a-a has an unmodified Gly-70 (but has no bromotryptophan). Post-translationally, ju et al. (2022) describe a disulfide connectivity (C55-C61; C56-C69; C66-C68) that differs from that of Han and colleagues (2006), McDougal et al. (2008), and Ueberheide et al. (2009). As to expression, expressed by the venom duct. Is present in all duct parts with a highest content in part 2 (proximal of the venom bulb) and then decreases in concentration toward the end of the duct.

The protein localises to the secreted. Its function is as follows. Intracranial injection into mice causes scratching and hyperactivity. In vitro, inhibits proliferation of the mice ovarian cancer cells ID8. The polypeptide is Conotoxin elongated-tx3a-a (Conus textile (Cloth-of-gold cone)).